Here is a 390-residue protein sequence, read N- to C-terminus: MPPSGLRLLPLLLPLLWLLMLTPGRPVAGLSTCKTIDMELVKRKRIEAIRGQILSKLRLASPPSQGDVPPGPLPEAILALYNSTRDRVAGESAETEPEPEADYYAKEVTRVLMVEYGNKIYDKMKSSSHSIYMFFNTSELREAVPEPVLLSRADVRLLRLKLKVEQHVELYQKYSNNSWRYLSNRLLAPSDSPEWLSFDVTGVVRQWLTRREEIEGFRLSAHCSCDSKDNTLQVDINGFSSGRRGDLATIHGMNRPFLLLMATPLERAQHLHSSRHRRALDTNYCFSSTEKNCCVRQLYIDFRKDLGWKWIHEPKGYHANFCLGPCPYIWSLDTQYSKVLALYNQHNPGASAAPCCVPQALEPLPIVYYVGRKPKVEQLSNMIVRSCKCS.

Positions 1–29 (MPPSGLRLLPLLLPLLWLLMLTPGRPVAG) are cleaved as a signal peptide. A straightjacket domain region spans residues 30-74 (LSTCKTIDMELVKRKRIEAIRGQILSKLRLASPPSQGDVPPGPLP). An arm domain region spans residues 75 to 271 (EAILALYNST…ATPLERAQHL (197 aa)). N-linked (GlcNAc...) asparagine glycosylation is found at Asn82, Asn136, and Asn176. The interval 226-252 (DSKDNTLQVDINGFSSGRRGDLATIHG) is bowtie tail. A Cell attachment site motif is present at residues 244 to 246 (RGD). Cystine bridges form between Cys285–Cys294, Cys293–Cys356, Cys322–Cys387, and Cys326–Cys389.

This sequence belongs to the TGF-beta family. Homodimer; disulfide-linked. Interacts with the serine proteases, HTRA1 and HTRA3: the interaction with either inhibits TGFB1-mediated signaling and the HTRA protease activity is required for this inhibition. May interact with THSD4; this interaction may lead to sequestration by FBN1 microfibril assembly and attenuation of TGFB signaling. Interacts with CD109, DPT and ASPN. Interacts with EFEMP2. Interacts with TSKU; the interaction contributes to regulation of the hair cycle. Interacts with TGFBR3. As to quaternary structure, homodimer; disulfide-linked. Interacts with transforming growth factor beta-1 (TGF-beta-1) chain; interaction is non-covalent and maintains TGF-beta-1 in a latent state; each latency-associated peptide (LAP) monomer interacts with TGF-beta-1 in the other monomer. Interacts with LTBP1; leading to regulation of TGF-beta-1 activation. Interacts with LRRC32/GARP; leading to regulation of TGF-beta-1 activation on the surface of activated regulatory T-cells (Tregs). Interacts with LRRC33/NRROS; leading to regulation of TGF-beta-1 activation in macrophages and microglia. Interacts (via cell attachment site) with integrins ITGAV and ITGB6 (ITGAV:ITGB6), leading to release of the active TGF-beta-1. Interacts with NREP; the interaction results in a decrease in TGFB1 autoinduction. Interacts with HSP90AB1; inhibits latent TGFB1 activation. In terms of assembly, homodimer; disulfide-linked. Interacts with TGF-beta receptors (TGFBR1 and TGFBR2), leading to signal transduction. Interacts with EFEMP2. Post-translationally, transforming growth factor beta-1 proprotein: The precursor proprotein is cleaved in the Golgi apparatus by FURIN to form Transforming growth factor beta-1 (TGF-beta-1) and Latency-associated peptide (LAP) chains, which remain non-covalently linked, rendering TGF-beta-1 inactive. In terms of processing, N-glycosylated. Deglycosylation leads to activation of Transforming growth factor beta-1 (TGF-beta-1); mechanisms triggering deglycosylation-driven activation of TGF-beta-1 are however unclear.

It localises to the secreted. The protein localises to the extracellular space. The protein resides in the extracellular matrix. Functionally, transforming growth factor beta-1 proprotein: Precursor of the Latency-associated peptide (LAP) and Transforming growth factor beta-1 (TGF-beta-1) chains, which constitute the regulatory and active subunit of TGF-beta-1, respectively. In terms of biological role, required to maintain the Transforming growth factor beta-1 (TGF-beta-1) chain in a latent state during storage in extracellular matrix. Associates non-covalently with TGF-beta-1 and regulates its activation via interaction with 'milieu molecules', such as LTBP1, LRRC32/GARP and LRRC33/NRROS, that control activation of TGF-beta-1. Interaction with LRRC33/NRROS regulates activation of TGF-beta-1 in macrophages and microglia. Interaction with LRRC32/GARP controls activation of TGF-beta-1 on the surface of activated regulatory T-cells (Tregs). Interaction with integrins (ITGAV:ITGB6 or ITGAV:ITGB8) results in distortion of the Latency-associated peptide chain and subsequent release of the active TGF-beta-1. Multifunctional protein that regulates the growth and differentiation of various cell types and is involved in various processes, such as normal development, immune function, microglia function and responses to neurodegeneration. Activation into mature form follows different steps: following cleavage of the proprotein in the Golgi apparatus, Latency-associated peptide (LAP) and Transforming growth factor beta-1 (TGF-beta-1) chains remain non-covalently linked rendering TGF-beta-1 inactive during storage in extracellular matrix. At the same time, LAP chain interacts with 'milieu molecules', such as LTBP1, LRRC32/GARP and LRRC33/NRROS that control activation of TGF-beta-1 and maintain it in a latent state during storage in extracellular milieus. TGF-beta-1 is released from LAP by integrins (ITGAV:ITGB6 or ITGAV:ITGB8): integrin-binding to LAP stabilizes an alternative conformation of the LAP bowtie tail and results in distortion of the LAP chain and subsequent release of the active TGF-beta-1. Once activated following release of LAP, TGF-beta-1 acts by binding to TGF-beta receptors (TGFBR1 and TGFBR2), which transduce signal. While expressed by many cells types, TGF-beta-1 only has a very localized range of action within cell environment thanks to fine regulation of its activation by Latency-associated peptide chain (LAP) and 'milieu molecules'. Plays an important role in bone remodeling: acts as a potent stimulator of osteoblastic bone formation, causing chemotaxis, proliferation and differentiation in committed osteoblasts. Can promote either T-helper 17 cells (Th17) or regulatory T-cells (Treg) lineage differentiation in a concentration-dependent manner. At high concentrations, leads to FOXP3-mediated suppression of RORC and down-regulation of IL-17 expression, favoring Treg cell development. At low concentrations in concert with IL-6 and IL-21, leads to expression of the IL-17 and IL-23 receptors, favoring differentiation to Th17 cells. Stimulates sustained production of collagen through the activation of CREB3L1 by regulated intramembrane proteolysis (RIP). Mediates SMAD2/3 activation by inducing its phosphorylation and subsequent translocation to the nucleus. Positively regulates odontoblastic differentiation in dental papilla cells, via promotion of IPO7-mediated translocation of phosphorylated SMAD2 to the nucleus and subsequent transcription of target genes. Can induce epithelial-to-mesenchymal transition (EMT) and cell migration in various cell types. This Bos taurus (Bovine) protein is Transforming growth factor beta-1 proprotein (TGFB1).